The following is a 606-amino-acid chain: Gastrula zinc finger protein XlCGF66.1 (606 aa).

Disordered stretches follow at residues 1 to 31 and 240 to 271; these read MGMW…RGKK and TLHS…KRQK. Residues 242-262 show a composition bias toward basic and acidic residues; it reads HSKDSCNEGHKHLSHKSDYNK. 11 C2H2-type zinc fingers span residues 273 to 295, 300 to 322, 328 to 350, 384 to 407, 413 to 435, 441 to 464, 470 to 492, 498 to 521, 527 to 549, 555 to 578, and 584 to 606; these read FSCS…QKTH, LLCL…RQTH, FSCS…QITH, DFCS…QQVH, FSCT…QRTH, YSCS…QQVH, FFCS…QRTH, FSCS…QRTH, DFCF…QQVH, and FSCS…HRTH.

The protein belongs to the krueppel C2H2-type zinc-finger protein family.

It is found in the nucleus. In terms of biological role, may be involved in transcriptional regulation. The protein is Gastrula zinc finger protein XlCGF66.1 of Xenopus laevis (African clawed frog).